Consider the following 431-residue polypeptide: Glutamate--tRNA ligase 1 (431 aa).

Residues 6 to 16 (PSPTGDMHIGN) carry the 'HIGH' region motif. The short motif at 235 to 239 (KMSKR) is the 'KMSKS' region element. ATP is bound at residue K238.

It belongs to the class-I aminoacyl-tRNA synthetase family. Glutamate--tRNA ligase type 1 subfamily. Monomer.

It is found in the cytoplasm. It carries out the reaction tRNA(Glu) + L-glutamate + ATP = L-glutamyl-tRNA(Glu) + AMP + diphosphate. Its function is as follows. Catalyzes the attachment of glutamate to tRNA(Glu) in a two-step reaction: glutamate is first activated by ATP to form Glu-AMP and then transferred to the acceptor end of tRNA(Glu). The sequence is that of Glutamate--tRNA ligase 1 from Nitratiruptor sp. (strain SB155-2).